The chain runs to 336 residues: HTH-type transcriptional regulator RafR (336 aa).

Residues 2–55 form the HTH lacI-type domain; sequence SLKAIATTLGISVTTVSRALGGFSDVAASTRERVEAEARRRGYRPNTQARRLKT. The segment at residues 3–22 is a DNA-binding region (H-T-H motif); sequence LKAIATTLGISVTTVSRALG.

As to quaternary structure, homodimer.

In terms of biological role, repressor that negatively controls the expression of the raffinose (raf) operon by binding to the raf operator (rafO) DNA. Acts by binding to two operator sites, O1 and 02, which flank the -35 raf promoter box. RafR bound to 02 alone results in 45 % repression of transcription, whereas RafR bound to O1 leads to only 6% repression. This Escherichia coli protein is HTH-type transcriptional regulator RafR.